The sequence spans 589 residues: UvrABC system protein C (589 aa).

The region spanning 10-87 is the GIY-YIG domain; it reads ESSGVYLMKK…IKKYSPKYNI (78 aa). Positions 197–232 constitute a UVR domain; sequence SKLINELTALMNKASQDMDFEKSIIYREQIKELKSI.

This sequence belongs to the UvrC family. In terms of assembly, interacts with UvrB in an incision complex.

It is found in the cytoplasm. In terms of biological role, the UvrABC repair system catalyzes the recognition and processing of DNA lesions. UvrC both incises the 5' and 3' sides of the lesion. The N-terminal half is responsible for the 3' incision and the C-terminal half is responsible for the 5' incision. In Fusobacterium nucleatum subsp. nucleatum (strain ATCC 25586 / DSM 15643 / BCRC 10681 / CIP 101130 / JCM 8532 / KCTC 2640 / LMG 13131 / VPI 4355), this protein is UvrABC system protein C.